Reading from the N-terminus, the 831-residue chain is DNA ligase (831 aa).

NAD(+)-binding positions include 34 to 38, 83 to 84, and glutamate 114; these read DADYD and SL. Lysine 116 (N6-AMP-lysine intermediate) is an active-site residue. Residues arginine 137, glutamate 174, lysine 291, and lysine 315 each coordinate NAD(+). Residues cysteine 409, cysteine 412, cysteine 427, and cysteine 433 each contribute to the Zn(2+) site. In terms of domain architecture, BRCT spans 749–831; the sequence is AHTAPLNGQS…LDFLEQYSAQ (83 aa).

Belongs to the NAD-dependent DNA ligase family. LigA subfamily. Mg(2+) serves as cofactor. The cofactor is Mn(2+).

It catalyses the reaction NAD(+) + (deoxyribonucleotide)n-3'-hydroxyl + 5'-phospho-(deoxyribonucleotide)m = (deoxyribonucleotide)n+m + AMP + beta-nicotinamide D-nucleotide.. Functionally, DNA ligase that catalyzes the formation of phosphodiester linkages between 5'-phosphoryl and 3'-hydroxyl groups in double-stranded DNA using NAD as a coenzyme and as the energy source for the reaction. It is essential for DNA replication and repair of damaged DNA. This chain is DNA ligase, found in Xylella fastidiosa (strain M12).